A 201-amino-acid polypeptide reads, in one-letter code: ATP-dependent Clp protease proteolytic subunit (201 aa).

The active-site Nucleophile is Ser-97. Residue His-122 is part of the active site.

It belongs to the peptidase S14 family. In terms of assembly, fourteen ClpP subunits assemble into 2 heptameric rings which stack back to back to give a disk-like structure with a central cavity, resembling the structure of eukaryotic proteasomes.

Its subcellular location is the cytoplasm. It catalyses the reaction Hydrolysis of proteins to small peptides in the presence of ATP and magnesium. alpha-casein is the usual test substrate. In the absence of ATP, only oligopeptides shorter than five residues are hydrolyzed (such as succinyl-Leu-Tyr-|-NHMec, and Leu-Tyr-Leu-|-Tyr-Trp, in which cleavage of the -Tyr-|-Leu- and -Tyr-|-Trp bonds also occurs).. Cleaves peptides in various proteins in a process that requires ATP hydrolysis. Has a chymotrypsin-like activity. Plays a major role in the degradation of misfolded proteins. In Nitratidesulfovibrio vulgaris (strain ATCC 29579 / DSM 644 / CCUG 34227 / NCIMB 8303 / VKM B-1760 / Hildenborough) (Desulfovibrio vulgaris), this protein is ATP-dependent Clp protease proteolytic subunit.